An 860-amino-acid polypeptide reads, in one-letter code: Leucine--tRNA ligase (860 aa).

A 'HIGH' region motif is present at residues Pro-42–His-52. Positions Lys-619–Ser-623 match the 'KMSKS' region motif. Residue Lys-622 participates in ATP binding.

It belongs to the class-I aminoacyl-tRNA synthetase family.

It is found in the cytoplasm. It carries out the reaction tRNA(Leu) + L-leucine + ATP = L-leucyl-tRNA(Leu) + AMP + diphosphate. This is Leucine--tRNA ligase from Edwardsiella ictaluri (strain 93-146).